A 114-amino-acid chain; its full sequence is MNTYAIIEAGGEQLQVQPGRFYDIRLNVPVTEFWENRKIVFSRVLMIRSESNTFLGKPWLEHATVNGRIFHPRRGNKLIIYKMRPKKHTSKKNGHRQTFMRLIIDSIFFNNQNL.

Belongs to the bacterial ribosomal protein bL21 family. Part of the 50S ribosomal subunit.

It localises to the plastid. The protein localises to the chloroplast. Its function is as follows. This protein binds to 23S rRNA. The sequence is that of Large ribosomal subunit protein bL21c from Staurastrum punctulatum (Green alga).